We begin with the raw amino-acid sequence, 310 residues long: GPN-loop GTPase 2 (310 aa).

Ala-2 bears the N-acetylalanine mark. GTP is bound at residue 19 to 24 (GSGKTT). The short motif at 76 to 78 (GPN) is the Gly-Pro-Asn (GPN)-loop; involved in dimer interface element. 178-181 (SKMD) contributes to the GTP binding site.

The protein belongs to the GPN-loop GTPase family. In terms of assembly, heterodimers with GPN1 or GPN3. Binds to RNA polymerase II (RNAPII).

Small GTPase required for proper localization of RNA polymerase II and III (RNAPII and RNAPIII). May act at an RNAP assembly step prior to nuclear import. This is GPN-loop GTPase 2 from Rattus norvegicus (Rat).